The chain runs to 371 residues: tRNA (guanine(26)-N(2))-dimethyltransferase (371 aa).

Residues 4-368 (IEVTEGRTTF…APLDAIAAAL (365 aa)) form the Trm1 methyltransferase domain. 5 residues coordinate S-adenosyl-L-methionine: Arg-41, Arg-66, Asp-82, Asp-108, and Ala-109. Zn(2+) is bound by residues Cys-237, Cys-240, Cys-256, and Cys-259.

This sequence belongs to the class I-like SAM-binding methyltransferase superfamily. Trm1 family.

It carries out the reaction guanosine(26) in tRNA + 2 S-adenosyl-L-methionine = N(2)-dimethylguanosine(26) in tRNA + 2 S-adenosyl-L-homocysteine + 2 H(+). In terms of biological role, dimethylates a single guanine residue at position 26 of a number of tRNAs using S-adenosyl-L-methionine as donor of the methyl groups. The protein is tRNA (guanine(26)-N(2))-dimethyltransferase of Methanosphaerula palustris (strain ATCC BAA-1556 / DSM 19958 / E1-9c).